The chain runs to 877 residues: EF-hand domain-containing family member B (877 aa).

Disordered stretches follow at residues Met1–Ser47 and Ala268–Ile290. 2 EF-hand domains span residues Gln605–His640 and Leu641–Thr676. Residues Asp618, Asp622, Glu629, Asp654, Asp656, Asp658, and Glu665 each contribute to the Ca(2+) site.

In terms of assembly, microtubule inner protein component of sperm flagellar doublet microtubules. Interacts with STIM1 and ORAI1; the interactions take place upon Ca(2+)-store depletion and dissociate through a Ca(2+)-dependent mechanism. Interaction with STIM1 inhibits STIM1 interaction with SARAF. As to expression, expressed in trachea multiciliated cells.

It is found in the cytoplasm. The protein localises to the cytoskeleton. Its subcellular location is the cilium axoneme. It localises to the flagellum axoneme. In terms of biological role, microtubule inner protein (MIP) part of the dynein-decorated doublet microtubules (DMTs) in cilia axoneme, which is required for motile cilia beating. Cytosolic sensor for calcium, modulates the interaction of STIM1 and ORAI1 upon store depletion and the activation of store-operated Ca(2+) entry (SOCE) and NFAT translocation from cytosol to nucleus. The chain is EF-hand domain-containing family member B from Bos taurus (Bovine).